The chain runs to 278 residues: 2-dehydro-3-deoxyphosphooctonate aldolase (278 aa).

It belongs to the KdsA family.

Its subcellular location is the cytoplasm. It catalyses the reaction D-arabinose 5-phosphate + phosphoenolpyruvate + H2O = 3-deoxy-alpha-D-manno-2-octulosonate-8-phosphate + phosphate. The protein operates within carbohydrate biosynthesis; 3-deoxy-D-manno-octulosonate biosynthesis; 3-deoxy-D-manno-octulosonate from D-ribulose 5-phosphate: step 2/3. It functions in the pathway bacterial outer membrane biogenesis; lipopolysaccharide biosynthesis. This is 2-dehydro-3-deoxyphosphooctonate aldolase from Bartonella tribocorum (strain CIP 105476 / IBS 506).